A 600-amino-acid polypeptide reads, in one-letter code: E3 ubiquitin-protein ligase RLIM (600 aa).

The residue at position 1 (M1) is an N-acetylmethionine. Basic and acidic residues predominate over residues 1-11 (MENSDSNDKGS). Disordered stretches follow at residues 1–24 (MENS…QMDR), 49–355 (NNLL…ERGG), and 417–497 (SDSE…VTFD). Polar residues-rich tracts occupy residues 103-131 (SVRQ…NPNS) and 140-152 (INVN…QTSE). S163 is modified (phosphoserine). The span at 166–175 (NMESSSQRQM) shows a compositional bias: polar residues. The segment covering 176–187 (ENSASESASARP) has biased composition (low complexity). S194, S227, and S229 each carry phosphoserine. Residues 213–228 (RSPEHRRTRARAERSR) are compositionally biased toward basic and acidic residues. Positions 244–255 (LEQSSENEPEGS) are enriched in polar residues. The residue at position 269 (S269) is a Phosphoserine. A compositionally biased stretch (low complexity) spans 288–306 (SQGTSSSDTGSNSESSGSG). Over residues 322 to 332 (RPGEYRQRDSI) the composition is skewed to basic and acidic residues. The span at 333–349 (ASRTRSRSQAPNNTVTY) shows a compositional bias: polar residues. The segment covering 448–475 (SGSSSSSSPSPSSSGESSESSSEMFEGS) has biased composition (low complexity). The segment at 546 to 587 (CSVCITEYTEGNKLRKLPCSHEYHVHCIDRWLSENSTCPICR) adopts an RING-type zinc-finger fold. Positions 597–600 (ESVV) match the PDZ-binding motif.

This sequence belongs to the RNF12 family. In terms of assembly, interacts (via N-terminus) with TERF1. Interacts (via C-terminus) with ESR1. Interacts with LIM/homeobox factors such as LHX3. Interacts with LDB1, LDB2 and SIN3A. Interacts with LIMK1.

The protein resides in the nucleus. It catalyses the reaction S-ubiquitinyl-[E2 ubiquitin-conjugating enzyme]-L-cysteine + [acceptor protein]-L-lysine = [E2 ubiquitin-conjugating enzyme]-L-cysteine + N(6)-ubiquitinyl-[acceptor protein]-L-lysine.. The protein operates within protein modification; protein ubiquitination. Functionally, E3 ubiquitin-protein ligase that acts as a negative coregulator for LIM homeodomain transcription factors by mediating the ubiquitination and subsequent degradation of LIM cofactors LDB1 and LDB2 and by mediating the recruitment the SIN3a/histone deacetylase corepressor complex. Ubiquitination and degradation of LIM cofactors LDB1 and LDB2 allows DNA-bound LIM homeodomain transcription factors to interact with other protein partners such as RLIM. Plays a role in telomere length-mediated growth suppression by mediating the ubiquitination and degradation of TERF1. By targeting ZFP42 for degradation, acts as an activator of random inactivation of X chromosome in the embryo, a stochastic process in which one X chromosome is inactivated to minimize sex-related dosage differences of X-encoded genes in somatic cells of female placental mammals. The protein is E3 ubiquitin-protein ligase RLIM (Rlim) of Mus musculus (Mouse).